A 443-amino-acid polypeptide reads, in one-letter code: Xaa-Pro dipeptidase (443 aa).

Mn(2+) is bound by residues D246, D257, H339, E384, and E423.

Belongs to the peptidase M24B family. Bacterial-type prolidase subfamily. Mn(2+) serves as cofactor.

The enzyme catalyses Xaa-L-Pro dipeptide + H2O = an L-alpha-amino acid + L-proline. Its function is as follows. Splits dipeptides with a prolyl residue in the C-terminal position. The polypeptide is Xaa-Pro dipeptidase (Escherichia coli O157:H7).